The following is a 452-amino-acid chain: UPF0210 protein CHY_1509 (452 aa).

It belongs to the UPF0210 family. As to quaternary structure, homodimer.

This is UPF0210 protein CHY_1509 from Carboxydothermus hydrogenoformans (strain ATCC BAA-161 / DSM 6008 / Z-2901).